The chain runs to 254 residues: Ribosomal protein L11 methyltransferase (254 aa).

S-adenosyl-L-methionine contacts are provided by threonine 107, glycine 128, aspartate 149, serine 175, and asparagine 191.

Belongs to the methyltransferase superfamily. PrmA family.

It is found in the cytoplasm. The catalysed reaction is L-lysyl-[protein] + 3 S-adenosyl-L-methionine = N(6),N(6),N(6)-trimethyl-L-lysyl-[protein] + 3 S-adenosyl-L-homocysteine + 3 H(+). It carries out the reaction an N-terminal L-alpha-aminoacyl-[protein] + 3 S-adenosyl-L-methionine = an N-terminal trimethyl-L-alpha-aminoacyl-[protein] + 3 S-adenosyl-L-homocysteine + 3 H(+). Functionally, methylates ribosomal protein L11. Preferentially recognizes free L11 before its incorporation into 50S subunits. This function is dispensable for growth and thermostability. This chain is Ribosomal protein L11 methyltransferase, found in Thermus thermophilus (strain ATCC 27634 / DSM 579 / HB8).